A 232-amino-acid polypeptide reads, in one-letter code: Large ribosomal subunit protein uL1 (232 aa).

The protein belongs to the universal ribosomal protein uL1 family. Part of the 50S ribosomal subunit.

Binds directly to 23S rRNA. The L1 stalk is quite mobile in the ribosome, and is involved in E site tRNA release. Functionally, protein L1 is also a translational repressor protein, it controls the translation of the L11 operon by binding to its mRNA. The sequence is that of Large ribosomal subunit protein uL1 from Porphyromonas gingivalis (strain ATCC 33277 / DSM 20709 / CIP 103683 / JCM 12257 / NCTC 11834 / 2561).